The following is a 556-amino-acid chain: MHIERVPGIALSPSGAVAAYLGDWARVAPAYEYDWRRQESFERRAAYLTGGGYAGDRAAVAAALERYNRALGADEASLENARLLGRPETLAAVTGQQAGILTGPAYSIYKAMTTIRLARQQSQRLGVPVVPVFWIAGEDHDWHEVSWVMVPAGNETRRLALSERFDGERRSVALAPMPASVSDLIDEFAQLMPDTEFKEEVIAHLREAAVGGPALDPEATGGAPSLADWFGRLMAWVFRGTGLVFLNSSDPALRRIEAPFFARALQQQAEVEAACAAGVDRWERELGFACTVEQTPNSLNLFIYIDGERLPLLGEGDRVWVRGRPDLSWSRSELVDLALRSPERFSTNVVLRPVVQSYLLPDLFYVGGPGEISYFGLLRDVYRAMGRQMPVVVPREGFTLVEPPIARILQKHELTLDDAFHRLDDLRQELLEREDRLGIAQAFASFRQDFERRHAELAALVLQLDPGLGQVVEENRRQIEHQINRLEEKAKQQHRKNCETALRQFDRLKANLTPNGLQERAFSILPYLVKYGPDLVRRLVDEVPLEEGWSHRAIYL.

2 coiled-coil regions span residues 408-442 and 468-513; these read ILQKHELTLDDAFHRLDDLRQELLEREDRLGIAQA and LGQV…ANLT.

The protein belongs to the BshC family.

Its function is as follows. Involved in bacillithiol (BSH) biosynthesis. May catalyze the last step of the pathway, the addition of cysteine to glucosamine malate (GlcN-Mal) to generate BSH. In Symbiobacterium thermophilum (strain DSM 24528 / JCM 14929 / IAM 14863 / T), this protein is Putative cysteine ligase BshC.